The chain runs to 157 residues: Probable succinate transporter subunit YjjB (157 aa).

4 consecutive transmembrane segments (helical) span residues 8–28 (LALA…AMVF), 50–70 (MILM…SMLV), 87–107 (VFTV…TAMI), and 129–149 (FLTA…PGLW).

It belongs to the ThrE exporter (TC 2.A.79) family. In terms of assembly, the transporter is composed of YjjB and YjjP.

Its subcellular location is the cell inner membrane. Functionally, involved in succinate export with YjjP. Both proteins are required for export. This chain is Probable succinate transporter subunit YjjB, found in Escherichia coli O127:H6 (strain E2348/69 / EPEC).